Here is a 268-residue protein sequence, read N- to C-terminus: Adenosylcobinamide-GDP ribazoletransferase (268 aa).

A run of 6 helical transmembrane segments spans residues Ile54–Trp74, Ala80–Ser100, Ile124–Ala144, Trp150–Val170, Ala202–Val222, and Gly243–Met263.

Belongs to the CobS family. Requires Mg(2+) as cofactor.

It is found in the cell membrane. The enzyme catalyses alpha-ribazole + adenosylcob(III)inamide-GDP = adenosylcob(III)alamin + GMP + H(+). It carries out the reaction alpha-ribazole 5'-phosphate + adenosylcob(III)inamide-GDP = adenosylcob(III)alamin 5'-phosphate + GMP + H(+). It functions in the pathway cofactor biosynthesis; adenosylcobalamin biosynthesis; adenosylcobalamin from cob(II)yrinate a,c-diamide: step 7/7. Functionally, joins adenosylcobinamide-GDP and alpha-ribazole to generate adenosylcobalamin (Ado-cobalamin). Also synthesizes adenosylcobalamin 5'-phosphate from adenosylcobinamide-GDP and alpha-ribazole 5'-phosphate. The protein is Adenosylcobinamide-GDP ribazoletransferase of Roseiflexus sp. (strain RS-1).